The following is a 458-amino-acid chain: Histidine--tRNA ligase (458 aa).

It belongs to the class-II aminoacyl-tRNA synthetase family. In terms of assembly, homodimer.

It localises to the cytoplasm. The enzyme catalyses tRNA(His) + L-histidine + ATP = L-histidyl-tRNA(His) + AMP + diphosphate + H(+). This chain is Histidine--tRNA ligase, found in Azobacteroides pseudotrichonymphae genomovar. CFP2.